Here is a 300-residue protein sequence, read N- to C-terminus: NAD kinase (300 aa).

Residue Asp-75 is the Proton acceptor of the active site. NAD(+) is bound by residues 75–76 (DG), 149–150 (ND), Arg-177, Asp-179, 190–195 (TAYALS), Ala-214, and Gln-248.

The protein belongs to the NAD kinase family. A divalent metal cation serves as cofactor.

The protein localises to the cytoplasm. The enzyme catalyses NAD(+) + ATP = ADP + NADP(+) + H(+). In terms of biological role, involved in the regulation of the intracellular balance of NAD and NADP, and is a key enzyme in the biosynthesis of NADP. Catalyzes specifically the phosphorylation on 2'-hydroxyl of the adenosine moiety of NAD to yield NADP. This chain is NAD kinase, found in Paraburkholderia phymatum (strain DSM 17167 / CIP 108236 / LMG 21445 / STM815) (Burkholderia phymatum).